A 395-amino-acid polypeptide reads, in one-letter code: Multidrug resistance protein MdtL (395 aa).

Transmembrane regions (helical) follow at residues 4–24 (FLLCSFALVLLYPAGIDMYLV), 42–62 (IAFSVYLAGMATAMLFAGKIA), 69–89 (PVAIVGALVFMMASLLCSRAS), 93–113 (LFLSGRFLQGVGAGGCYVVAF), 131–151 (LLNGITCIVPVLAPVVGHLIM), 158–178 (SLFYTMSAMGIIVGLLSLFIL), 217–237 (VSVILTFVNASPVLLMEVMGF), 247–267 (ALTAGVSMVVSFSTPFALGLF), 271–291 (TLMLVSQGLFLTAGVTLSLAH), 295–315 (VTLFGLTLICAGFSVGFGVAM), 333–353 (LGIAQVCGSSLWIWLAAILGI), and 358–378 (MLIGILIGCSIVSILLIFSVA).

The protein belongs to the major facilitator superfamily. DHA1 family. MdtL (TC 2.A.1.2.22) subfamily.

Its subcellular location is the cell inner membrane. The chain is Multidrug resistance protein MdtL from Salmonella agona (strain SL483).